The sequence spans 733 residues: Centrosomal protein of 68 kDa (733 aa).

A compositionally biased stretch (basic and acidic residues) spans 71 to 80; that stretch reads SKEPVADRSK. Disordered stretches follow at residues 71–92, 150–207, and 222–244; these read SKEPVADRSKPPLRGPLPSASV, GLSQ…SFAN, and VVGAGPPLQGSAQPLTSGSDATG. Positions 178-190 are enriched in low complexity; it reads SSRSISASSVGSS. The segment covering 231–241 has biased composition (polar residues); sequence GSAQPLTSGSD. Position 315 is a phosphoserine (Ser-315). Positions 420 to 442 are disordered; sequence PQLKTKEKEPPFPRQKRGRQHVS. Residues Ser-453 and Ser-459 each carry the phosphoserine modification. Residues 497-571 form a disordered region; that stretch reads HSSLQVSDSD…KPLKTQPASK (75 aa). Over residues 540–569 the composition is skewed to polar residues; the sequence is IQPQDSRGKSSLMSNQTLGVSSKPLKTQPA.

Interacts with CNTLN; the interaction recruits CEP68 to the centrosome. Interacts with the SCF(FBXW11) complex which contains SKP1, CUL1 and FBXW11; the interaction is probably mediated by FBXW11 and the complex also contains CDK5RAP2 and PCNT. Also interacts with F-box protein BTRC. Interacts with serine/threonine-protein kinase PLK1; the interaction leads to phosphorylation of CEP68 and its subsequent degradation. Interacts with NEK2; the interaction leads to phosphorylation of CEP68. In terms of processing, phosphorylation by PLK1 is required for binding to BTRC in prometaphase. Phosphorylated directly or indirectly by NEK2. NEK2-mediated phosphorylation promotes CEP68 dissociation from the centrosome and its degradation at the onset of mitosis. Post-translationally, ubiquitinated and targeted for proteasomal degradation in early mitosis by the SCF(BTRC) and/or SCF(FBXW11) E3 ubiquitin-protein ligase complexes. Degradation is complete by prometaphase and is required for removal of CDK5RAP2 from the peripheral pericentriolar material and subsequent centriole separation.

The protein resides in the cytoplasm. It localises to the cytoskeleton. Its subcellular location is the microtubule organizing center. It is found in the centrosome. Involved in maintenance of centrosome cohesion, probably as part of a linker structure which prevents centrosome splitting. Required for localization of CDK5RAP2 to the centrosome during interphase. Contributes to CROCC/rootletin filament formation. The chain is Centrosomal protein of 68 kDa (Cep68) from Mus musculus (Mouse).